The primary structure comprises 522 residues: Wax ester synthase/diacylglycerol acyltransferase 4 (522 aa).

A compositionally biased stretch (basic and acidic residues) spans 1-12; it reads MEIETRPHISGD. The interval 1 to 20 is disordered; sequence MEIETRPHISGDEKEEEQPL. Over 1–205 the chain is Cytoplasmic; the sequence is MEIETRPHIS…SDSRLLWLVK (205 aa). Catalysis depends on His-149, which acts as the Proton acceptor. Residues 206–226 traverse the membrane as a helical segment; the sequence is VIWTAVILGLNTVCDALEFIV. Over 227-522 the chain is Lumenal; it reads TTLFVKDTET…QIAGLLYRML (296 aa). N-linked (GlcNAc...) asparagine glycans are attached at residues Asn-270 and Asn-409.

In the N-terminal section; belongs to the long-chain O-acyltransferase family. As to expression, mostly expressed in roots, flowers and siliques.

Its subcellular location is the cell membrane. It is found in the endoplasmic reticulum membrane. It catalyses the reaction an acyl-CoA + a 1,2-diacyl-sn-glycerol = a triacyl-sn-glycerol + CoA. The catalysed reaction is a long chain fatty alcohol + a fatty acyl-CoA = a wax ester + CoA. The protein operates within glycerolipid metabolism; triacylglycerol biosynthesis. It functions in the pathway lipid metabolism. Bifunctional wax ester synthase/diacylglycerol acyltransferase. Involved in cuticular wax biosynthesis. In Arabidopsis thaliana (Mouse-ear cress), this protein is Wax ester synthase/diacylglycerol acyltransferase 4.